The primary structure comprises 63 residues: Large ribosomal subunit protein bL28 (63 aa).

The protein belongs to the bacterial ribosomal protein bL28 family.

The chain is Large ribosomal subunit protein bL28 from Coprothermobacter proteolyticus (strain ATCC 35245 / DSM 5265 / OCM 4 / BT).